Reading from the N-terminus, the 231-residue chain is Octanoyl-[acyl-carrier-protein]:protein N-octanoyltransferase LIPT2, mitochondrial (231 aa).

Residues 41–224 enclose the BPL/LPL catalytic domain; it reads GTKAGVLLVC…AFKETFKCTL (184 aa). Residue Lys-43 is modified to N6-succinyllysine. Residues 85–92, 154–156, and 167–169 each bind substrate; these read RGGLATFH, AIG, and GLA. Cys-185 functions as the Acyl-thioester intermediate in the catalytic mechanism.

It belongs to the LipB family.

Its subcellular location is the mitochondrion. The enzyme catalyses octanoyl-[ACP] + L-lysyl-[protein] = N(6)-octanoyl-L-lysyl-[protein] + holo-[ACP] + H(+). It functions in the pathway protein modification; protein lipoylation via endogenous pathway; protein N(6)-(lipoyl)lysine from octanoyl-[acyl-carrier-protein]: step 1/2. Functionally, catalyzes the transfer of endogenously produced octanoic acid from octanoyl-acyl-carrier-protein onto the lipoyl domains of lipoate-dependent enzymes such as the protein H of the glycine cleavage system (GCSH). Lipoyl-ACP can also act as a substrate although octanoyl-ACP is likely to be the physiological substrate. The polypeptide is Octanoyl-[acyl-carrier-protein]:protein N-octanoyltransferase LIPT2, mitochondrial (Mus musculus (Mouse)).